Here is a 319-residue protein sequence, read N- to C-terminus: D-alanine--D-alanine ligase (319 aa).

The ATP-grasp domain maps to 120–315 (KRVLAQAGVP…YPELLRRLVE (196 aa)). 147-198 (DPPFFVKPANTGSSVGISRVERFQDLEAALALAFRYDEKAVVEKALSPVREL) provides a ligand contact to ATP. Mg(2+) is bound by residues D270, E282, and N284.

The protein belongs to the D-alanine--D-alanine ligase family. Mg(2+) is required as a cofactor. Mn(2+) serves as cofactor.

The protein localises to the cytoplasm. The catalysed reaction is 2 D-alanine + ATP = D-alanyl-D-alanine + ADP + phosphate + H(+). Its pathway is cell wall biogenesis; peptidoglycan biosynthesis. Its function is as follows. Cell wall formation. In Thermus thermophilus (strain ATCC 27634 / DSM 579 / HB8), this protein is D-alanine--D-alanine ligase.